Consider the following 101-residue polypeptide: Ferredoxin Fdx2 (101 aa).

2 consecutive 4Fe-4S ferredoxin-type domains span residues 1–29 and 31–64; these read MATY…EGDE and YVID…PNPQ. [4Fe-4S] cluster-binding residues include Cys-9, Cys-12, Cys-15, Cys-19, Cys-38, Cys-41, Cys-50, and Cys-54.

Requires [4Fe-4S] cluster as cofactor.

Ferredoxins are iron-sulfur proteins that transfer electrons in a wide variety of metabolic reactions. Fdx2 can receive electrons from both FdR_A and FdR_B ferredoxin reductases, with a preference for FdR_B compared with FdR_A, and transfer the electrons to the cytochrome P450 CYP260A1. The polypeptide is Ferredoxin Fdx2 (Sorangium cellulosum (strain So ce56) (Polyangium cellulosum (strain So ce56))).